The chain runs to 204 residues: Ribonuclease HII (204 aa).

The RNase H type-2 domain maps to 14 to 204 (QYICGVDEVG…SFKLSCLGEK (191 aa)). Residues Asp-20, Glu-21, and Asp-116 each contribute to the a divalent metal cation site.

The protein belongs to the RNase HII family. Mn(2+) is required as a cofactor. Mg(2+) serves as cofactor.

It localises to the cytoplasm. It carries out the reaction Endonucleolytic cleavage to 5'-phosphomonoester.. In terms of biological role, endonuclease that specifically degrades the RNA of RNA-DNA hybrids. The protein is Ribonuclease HII of Chloroherpeton thalassium (strain ATCC 35110 / GB-78).